The following is a 264-amino-acid chain: tRNA (guanine-N(1)-)-methyltransferase (264 aa).

S-adenosyl-L-methionine-binding positions include Gly120 and 140 to 145; that span reads IGDYVL.

Belongs to the RNA methyltransferase TrmD family. As to quaternary structure, homodimer.

It is found in the cytoplasm. The enzyme catalyses guanosine(37) in tRNA + S-adenosyl-L-methionine = N(1)-methylguanosine(37) in tRNA + S-adenosyl-L-homocysteine + H(+). Functionally, specifically methylates guanosine-37 in various tRNAs. The chain is tRNA (guanine-N(1)-)-methyltransferase from Halorhodospira halophila (strain DSM 244 / SL1) (Ectothiorhodospira halophila (strain DSM 244 / SL1)).